Reading from the N-terminus, the 396-residue chain is S-adenosylmethionine synthase 4 (396 aa).

Mg(2+) is bound at residue glutamate 12. Histidine 18 is a binding site for ATP. Glutamate 46 serves as a coordination point for K(+). L-methionine contacts are provided by glutamate 59 and glutamine 102. ATP-binding positions include 170-172 (DGK), 238-241 (SGRF), aspartate 249, 255-256 (RK), alanine 272, lysine 276, and lysine 280. L-methionine is bound at residue aspartate 249. Lysine 280 provides a ligand contact to L-methionine.

It belongs to the AdoMet synthase family. As to quaternary structure, homotetramer. Mn(2+) serves as cofactor. It depends on Mg(2+) as a cofactor. Requires Co(2+) as cofactor. K(+) is required as a cofactor.

It localises to the cytoplasm. The enzyme catalyses L-methionine + ATP + H2O = S-adenosyl-L-methionine + phosphate + diphosphate. The protein operates within amino-acid biosynthesis; S-adenosyl-L-methionine biosynthesis; S-adenosyl-L-methionine from L-methionine: step 1/1. Functionally, catalyzes the formation of S-adenosylmethionine from methionine and ATP. The reaction comprises two steps that are both catalyzed by the same enzyme: formation of S-adenosylmethionine (AdoMet) and triphosphate, and subsequent hydrolysis of the triphosphate. The chain is S-adenosylmethionine synthase 4 (SAM4) from Hordeum vulgare (Barley).